Here is a 602-residue protein sequence, read N- to C-terminus: Raftlin (602 aa).

Residue Gly-2 is the site of N-myristoyl glycine attachment. The S-palmitoyl cysteine moiety is linked to residue Cys-3. Residues 178–195 (TPASNNSVQSRDNKNVSN) are compositionally biased toward polar residues. 3 disordered regions span residues 178 to 282 (TPAS…RCSK), 451 to 495 (KKES…EVTE), and 524 to 567 (NETA…QSAP). Composition is skewed to basic and acidic residues over residues 197 to 209 (PEDHASLDGEKID) and 244 to 265 (PDCKSAKGSKEQHEHPGGREAP). Residues 468–477 (KPMKKSRKTK) are compositionally biased toward basic residues.

The protein belongs to the raftlin family.

The protein localises to the cell membrane. Functionally, may play a pivotal role in the formation and/or maintenance of lipid rafts. May regulate B-cell antigen receptor-mediated signaling. This is Raftlin (RFTN1) from Gallus gallus (Chicken).